Consider the following 760-residue polypeptide: 5-methyltetrahydropteroyltriglutamate--homocysteine methyltransferase (760 aa).

5-methyltetrahydropteroyltri-L-glutamate-binding positions include 17–20 (RELK) and lysine 118. Residues 436-438 (IGS) and glutamate 489 each bind L-homocysteine. Residues 436 to 438 (IGS) and glutamate 489 each bind L-methionine. 5-methyltetrahydropteroyltri-L-glutamate is bound by residues 520–521 (RC) and tryptophan 566. An L-homocysteine-binding site is contributed by aspartate 604. Residue aspartate 604 coordinates L-methionine. A 5-methyltetrahydropteroyltri-L-glutamate-binding site is contributed by glutamate 610. Zn(2+) is bound by residues histidine 646, cysteine 648, and glutamate 670. The Proton donor role is filled by histidine 699. Residue cysteine 731 coordinates Zn(2+).

Belongs to the vitamin-B12 independent methionine synthase family. The cofactor is Zn(2+).

The catalysed reaction is 5-methyltetrahydropteroyltri-L-glutamate + L-homocysteine = tetrahydropteroyltri-L-glutamate + L-methionine. It functions in the pathway amino-acid biosynthesis; L-methionine biosynthesis via de novo pathway; L-methionine from L-homocysteine (MetE route): step 1/1. In terms of biological role, catalyzes the transfer of a methyl group from 5-methyltetrahydrofolate to homocysteine resulting in methionine formation. The protein is 5-methyltetrahydropteroyltriglutamate--homocysteine methyltransferase of Vibrio parahaemolyticus serotype O3:K6 (strain RIMD 2210633).